Here is a 441-residue protein sequence, read N- to C-terminus: MALTQLNSTCSKPQLHSSSQLSFLSRTRTRTLPRHYHSTFAPLHRTQHARISCSVAPNQVQVPAAQTQDPKGKPDCYGVFCLTYDLKAEEETKSWKKLINIAVSGAAGMISNHLLFKLASGEVFGPDQPIALKLLGSERSIQALEGVAMELEDSLFPLLREVVISIDPYEVFQDAEWALLIGAKPRGPGVERAALLDINGQIFAEQGKALNAVASRNAKVIVVGNPCNTNALICLKNAPNIPAKNFHALTRLDENRAKCQLALKAGVFYDKVSNMTIWGNHSTTQVPDFLNARIDGLPVKEVIKDNKWLEEEFTEKVQKRGGVLIQKWGRSSAASTSVSIVDAIRSLITPTPEGDWFSSGVYTNGNPYGIAEDIVFSMPCRSKGDGDYELVNDVIFDDYLRQKLAKTEAELLAEKKCVAHLTGEGIAVCDLPGDTMLPGEM.

The N-terminal 58 residues, 1-58, are a transit peptide targeting the chloroplast; sequence MALTQLNSTCSKPQLHSSSQLSFLSRTRTRTLPRHYHSTFAPLHRTQHARISCSVAPN. Cysteines 76 and 81 form a disulfide. Residue 105–111 participates in NADP(+) binding; that stretch reads GAAGMIS. Substrate contacts are provided by R186 and R192. N199 is an NADP(+) binding site. Q206 contributes to the NAD(+) binding site. Residue 223–225 coordinates NADP(+); the sequence is VGN. Residues N225 and R256 each contribute to the substrate site. H281 (proton acceptor) is an active-site residue. A disulfide bridge links C417 with C429.

This sequence belongs to the LDH/MDH superfamily. MDH type 2 family. Homodimer.

Its subcellular location is the plastid. It localises to the chloroplast. The enzyme catalyses (S)-malate + NADP(+) = oxaloacetate + NADPH + H(+). Its activity is regulated as follows. Chloroplast NADP-MDH is activated upon illumination. In order to be enzymatically active, disulfide bridges on the protein must be reduced by thioredoxin which receives electrons from ferredoxin and the electron transport system of photosynthesis. In terms of biological role, the chloroplastic, NADP-dependent form is essential for the photosynthesis C4 cycle, which allows plants to circumvent the problem of photorespiration. In C4 plants, NADP-MDH activity acts to convert oxaloacetate to malate in chloroplasts of mesophyll cells for transport to the bundle sheath cells. The polypeptide is Malate dehydrogenase [NADP], chloroplastic (Pisum sativum (Garden pea)).